Here is a 266-residue protein sequence, read N- to C-terminus: 4-hydroxy-tetrahydrodipicolinate reductase (266 aa).

10–15 serves as a coordination point for NAD(+); it reads GPRGRM. K38 provides a ligand contact to NADP(+). Residues 99-101 and 125-128 each bind NAD(+); these read GTT and APNF. The Proton donor/acceptor role is filled by H155. (S)-2,3,4,5-tetrahydrodipicolinate is bound at residue H156. K159 acts as the Proton donor in catalysis. A (S)-2,3,4,5-tetrahydrodipicolinate-binding site is contributed by 165–166; it reads GT.

Belongs to the DapB family.

It localises to the cytoplasm. The enzyme catalyses (S)-2,3,4,5-tetrahydrodipicolinate + NAD(+) + H2O = (2S,4S)-4-hydroxy-2,3,4,5-tetrahydrodipicolinate + NADH + H(+). The catalysed reaction is (S)-2,3,4,5-tetrahydrodipicolinate + NADP(+) + H2O = (2S,4S)-4-hydroxy-2,3,4,5-tetrahydrodipicolinate + NADPH + H(+). It functions in the pathway amino-acid biosynthesis; L-lysine biosynthesis via DAP pathway; (S)-tetrahydrodipicolinate from L-aspartate: step 4/4. Its function is as follows. Catalyzes the conversion of 4-hydroxy-tetrahydrodipicolinate (HTPA) to tetrahydrodipicolinate. In Bacillus cereus (strain ATCC 10987 / NRS 248), this protein is 4-hydroxy-tetrahydrodipicolinate reductase.